The sequence spans 302 residues: 4-hydroxy-tetrahydrodipicolinate synthase (302 aa).

Thr-55 provides a ligand contact to pyruvate. The active-site Proton donor/acceptor is the Tyr-144. The active-site Schiff-base intermediate with substrate is Lys-172. Val-214 contacts pyruvate.

The protein belongs to the DapA family. Homotetramer; dimer of dimers.

The protein resides in the cytoplasm. It carries out the reaction L-aspartate 4-semialdehyde + pyruvate = (2S,4S)-4-hydroxy-2,3,4,5-tetrahydrodipicolinate + H2O + H(+). It participates in amino-acid biosynthesis; L-lysine biosynthesis via DAP pathway; (S)-tetrahydrodipicolinate from L-aspartate: step 3/4. Catalyzes the condensation of (S)-aspartate-beta-semialdehyde [(S)-ASA] and pyruvate to 4-hydroxy-tetrahydrodipicolinate (HTPA). This chain is 4-hydroxy-tetrahydrodipicolinate synthase, found in Prochlorococcus marinus (strain NATL2A).